A 391-amino-acid chain; its full sequence is Phosphoglycerate kinase (391 aa).

Residues 21 to 23 (DLN), R36, 59 to 62 (HLGR), R113, and R146 each bind substrate. Residues K197, E319, and 345–348 (GGDT) each bind ATP.

It belongs to the phosphoglycerate kinase family. As to quaternary structure, monomer.

It localises to the cytoplasm. The catalysed reaction is (2R)-3-phosphoglycerate + ATP = (2R)-3-phospho-glyceroyl phosphate + ADP. The protein operates within carbohydrate degradation; glycolysis; pyruvate from D-glyceraldehyde 3-phosphate: step 2/5. The polypeptide is Phosphoglycerate kinase (Xanthomonas euvesicatoria pv. vesicatoria (strain 85-10) (Xanthomonas campestris pv. vesicatoria)).